The following is a 61-amino-acid chain: Large ribosomal subunit protein bL32 (61 aa).

It belongs to the bacterial ribosomal protein bL32 family.

The chain is Large ribosomal subunit protein bL32 from Phytoplasma mali (strain AT).